A 122-amino-acid chain; its full sequence is MVNDTISDMLTRLRNAYLADKEQTSLKATRVVKDIAQVLVQEGFLGPIEQEENGFFTVNLKRGVKQFERVSTPGVRVYANHKQLQPVLNGMGVAVISTSQGIMTDRKARALGIGGEVLCKIW.

Belongs to the universal ribosomal protein uS8 family. In terms of assembly, part of the 30S ribosomal subunit.

It localises to the plastid. The protein localises to the chloroplast. Its function is as follows. One of the primary rRNA binding proteins, it binds directly to 16S rRNA central domain where it helps coordinate assembly of the platform of the 30S subunit. In Ostreococcus tauri, this protein is Small ribosomal subunit protein uS8c (rps8).